Consider the following 887-residue polypeptide: Probable LRR receptor-like serine/threonine-protein kinase At5g59680 (887 aa).

The N-terminal stretch at 1–23 (MERSLELLLLLIRTLAIIHISQA) is a signal peptide. Residues 25 to 510 (SQQGFISLDC…TKSGKSFPVT (486 aa)) are Extracellular-facing. N143, N230, N256, N289, N338, N363, N400, N416, N432, N445, N464, and N471 each carry an N-linked (GlcNAc...) asparagine glycan. LRR repeat units lie at residues 411 to 434 (RITT…QNLT), 435 to 457 (TLEK…LSNM), and 459 to 481 (SLLV…LQRK). The helical transmembrane segment at 511 to 531 (IVASVGSAAILIVVLVLVLFL) threads the bilayer. Topologically, residues 532-887 (RKKKPSAVEV…FDAEMIPRAR (356 aa)) are cytoplasmic. T571 carries the phosphothreonine modification. The 274-residue stretch at 580-853 (NNFGRVVGEG…HVVIELKECL (274 aa)) folds into the Protein kinase domain. ATP is bound by residues 586 to 594 (VGEGGFGVV) and K608. A Phosphotyrosine modification is found at Y653. The active-site Proton acceptor is the D705. A Phosphoserine modification is found at S739. Phosphothreonine is present on residues T740 and T745. Y753 carries the post-translational modification Phosphotyrosine.

The protein belongs to the protein kinase superfamily. Ser/Thr protein kinase family.

It is found in the membrane. The enzyme catalyses L-seryl-[protein] + ATP = O-phospho-L-seryl-[protein] + ADP + H(+). It carries out the reaction L-threonyl-[protein] + ATP = O-phospho-L-threonyl-[protein] + ADP + H(+). This is Probable LRR receptor-like serine/threonine-protein kinase At5g59680 from Arabidopsis thaliana (Mouse-ear cress).